The chain runs to 340 residues: 4-amino-5-hydroxymethyl-2-methylpyrimidine phosphate synthase THI13 (340 aa).

At Lys-62 the chain carries N6-(pyridoxal phosphate)lysine. Residue His-66 is part of the active site. 115–118 (GEFG) is a pyridoxal 5'-phosphate binding site. Residues 195-199 (CCCFC) carry the CCCFC; essential for catalytic activity, may be the site of iron coordination motif.

Belongs to the NMT1/THI5 family. Homodimer. The cofactor is Fe cation.

The enzyme catalyses N(6)-(pyridoxal phosphate)-L-lysyl-[4-amino-5-hydroxymethyl-2-methylpyrimidine phosphate synthase] + L-histidyl-[4-amino-5-hydroxymethyl-2-methylpyrimidine phosphate synthase] + 2 Fe(3+) + 4 H2O = L-lysyl-[4-amino-5-hydroxymethyl-2-methylpyrimidine phosphate synthase] + (2S)-2-amino-5-hydroxy-4-oxopentanoyl-[4-amino-5-hydroxymethyl-2-methylpyrimidine phosphate synthase] + 4-amino-2-methyl-5-(phosphooxymethyl)pyrimidine + 3-oxopropanoate + 2 Fe(2+) + 2 H(+). It functions in the pathway cofactor biosynthesis; thiamine diphosphate biosynthesis. Functionally, responsible for the formation of the pyrimidine heterocycle in the thiamine biosynthesis pathway. Catalyzes the formation of hydroxymethylpyrimidine phosphate (HMP-P) from histidine and pyridoxal phosphate (PLP). The protein uses PLP and the active site histidine to form HMP-P, generating an inactive enzyme. The enzyme can only undergo a single turnover, which suggests it is a suicide enzyme. The protein is 4-amino-5-hydroxymethyl-2-methylpyrimidine phosphate synthase THI13 of Saccharomyces cerevisiae (strain ATCC 204508 / S288c) (Baker's yeast).